Consider the following 162-residue polypeptide: uncharacterized protein (162 aa).

Positions 1 to 23 (MLSLKSPAVLLSMVILVPLFALA) are cleaved as a signal peptide.

This is an uncharacterized protein from Mycosarcoma maydis (Corn smut fungus).